The following is a 162-amino-acid chain: Phosphopantetheine adenylyltransferase (162 aa).

S11 contributes to the substrate binding site. ATP contacts are provided by residues 11 to 12 (SF) and H19. The substrate site is built by K43, V76, and R90. ATP contacts are provided by residues 91–93 (GLR), E101, and 126–132 (HLYISSS).

Belongs to the bacterial CoaD family. Homohexamer. It depends on Mg(2+) as a cofactor.

It localises to the cytoplasm. The catalysed reaction is (R)-4'-phosphopantetheine + ATP + H(+) = 3'-dephospho-CoA + diphosphate. It functions in the pathway cofactor biosynthesis; coenzyme A biosynthesis; CoA from (R)-pantothenate: step 4/5. Reversibly transfers an adenylyl group from ATP to 4'-phosphopantetheine, yielding dephospho-CoA (dPCoA) and pyrophosphate. The polypeptide is Phosphopantetheine adenylyltransferase (Streptococcus pneumoniae (strain ATCC 700669 / Spain 23F-1)).